A 94-amino-acid polypeptide reads, in one-letter code: Selenoprotein K (94 aa).

A helical membrane pass occupies residues 20–42 (LSFITDFFWGIAEFVVFFFKTLL). The disordered stretch occupies residues 48-94 (KRRGYGGSSDSRYDDGRGPPGNPPRRMGRISHLRGPSPPPMAGGUGR). Residue Sec92 is a non-standard amino acid, selenocysteine.

The protein belongs to the selenoprotein K family. Interacts with DERL1, DERL2, DERL3 and SELENOS. The SELENOK-SELENOS complex interacts with VCP. Interacts with ZDHHC6. In terms of processing, cleaved by CAPN2/m-calpain in resting macrophages but not in activated macrophages. Macrophage activation up-regulates expression of the calpain inhibitor CAST/calpastatin, resulting in inhibition of CAPN2 activity. Truncated SELENOK proteins produced by failed UGA/Sec decoding are ubiquitinated by the CRL2(KLHDC2) complex, which recognizes the diglycine (Gly-Gly) at the C-terminus of truncated SELENOK proteins.

It localises to the endoplasmic reticulum membrane. It is found in the cell membrane. Required for Ca(2+) flux in immune cells and plays a role in T-cell proliferation and in T-cell and neutrophil migration. Involved in endoplasmic reticulum-associated degradation (ERAD) of soluble glycosylated proteins. Required for palmitoylation and cell surface expression of CD36 and involved in macrophage uptake of low-density lipoprotein and in foam cell formation. Together with ZDHHC6, required for palmitoylation of ITPR1 in immune cells, leading to regulate ITPR1 stability and function. Plays a role in protection of cells from ER stress-induced apoptosis. Protects cells from oxidative stress when overexpressed in cardiomyocytes. The protein is Selenoprotein K of Rattus norvegicus (Rat).